The primary structure comprises 837 residues: Protein translocase subunit SecA (837 aa).

Residues Gln-85, 103–107 (GEGKT), and Asp-493 each bind ATP. Zn(2+) contacts are provided by Cys-821, Cys-823, Cys-832, and His-833.

The protein belongs to the SecA family. As to quaternary structure, monomer and homodimer. Part of the essential Sec protein translocation apparatus which comprises SecA, SecYEG and auxiliary proteins SecDF. Other proteins may also be involved. The cofactor is Zn(2+).

It localises to the cell membrane. The protein localises to the cytoplasm. It catalyses the reaction ATP + H2O + cellular proteinSide 1 = ADP + phosphate + cellular proteinSide 2.. Functionally, part of the Sec protein translocase complex. Interacts with the SecYEG preprotein conducting channel. Has a central role in coupling the hydrolysis of ATP to the transfer of proteins into and across the cell membrane, serving as an ATP-driven molecular motor driving the stepwise translocation of polypeptide chains across the membrane. The sequence is that of Protein translocase subunit SecA from Streptococcus pneumoniae (strain Taiwan19F-14).